We begin with the raw amino-acid sequence, 460 residues long: Elongation factor 1-alpha (460 aa).

Residue Gly-2 is modified to N,N,N-trimethylglycine. At Lys-3 the chain carries N6,N6-dimethyllysine; alternate. Lys-3 carries the post-translational modification N6-methyllysine; alternate. A tr-type G domain is found at 6–241; sequence KTHINVVVIG…DAIEPPKRPT (236 aa). Positions 15–22 are G1; it reads GHVDSGKS. Residue 15–22 coordinates GTP; it reads GHVDSGKS. Residue Lys-31 is modified to N6-methyllysine. Residues 71–75 are G2; that stretch reads GITID. Lys-80 bears the N6,N6,N6-trimethyllysine mark. The G3 stretch occupies residues 92 to 95; that stretch reads DAPG. GTP-binding positions include 92–96 and 154–157; these read DAPGH and NKMD. The interval 154–157 is G4; that stretch reads NKMD. A G5 region spans residues 193–195; the sequence is SGF. Lys-317 is modified (N6,N6-dimethyllysine; alternate). At Lys-317 the chain carries N6-methyllysine; alternate. Lys-391 is modified (N6-methyllysine).

This sequence belongs to the TRAFAC class translation factor GTPase superfamily. Classic translation factor GTPase family. EF-Tu/EF-1A subfamily.

The protein localises to the cytoplasm. Functionally, this protein promotes the GTP-dependent binding of aminoacyl-tRNA to the A-site of ribosomes during protein biosynthesis. This chain is Elongation factor 1-alpha (tef-1), found in Neurospora crassa (strain ATCC 24698 / 74-OR23-1A / CBS 708.71 / DSM 1257 / FGSC 987).